A 277-amino-acid polypeptide reads, in one-letter code: Release factor glutamine methyltransferase (277 aa).

S-adenosyl-L-methionine contacts are provided by residues 120-124 (GTGSG), D143, W171, and N186. Residue 186 to 189 (NPPY) coordinates substrate.

This sequence belongs to the protein N5-glutamine methyltransferase family. PrmC subfamily.

The enzyme catalyses L-glutaminyl-[peptide chain release factor] + S-adenosyl-L-methionine = N(5)-methyl-L-glutaminyl-[peptide chain release factor] + S-adenosyl-L-homocysteine + H(+). Methylates the class 1 translation termination release factors RF1/PrfA and RF2/PrfB on the glutamine residue of the universally conserved GGQ motif. The protein is Release factor glutamine methyltransferase of Coxiella burnetii (strain RSA 493 / Nine Mile phase I).